The chain runs to 98 residues: Aspartyl/glutamyl-tRNA(Asn/Gln) amidotransferase subunit C (98 aa).

It belongs to the GatC family. As to quaternary structure, heterotrimer of A, B and C subunits.

The enzyme catalyses L-glutamyl-tRNA(Gln) + L-glutamine + ATP + H2O = L-glutaminyl-tRNA(Gln) + L-glutamate + ADP + phosphate + H(+). The catalysed reaction is L-aspartyl-tRNA(Asn) + L-glutamine + ATP + H2O = L-asparaginyl-tRNA(Asn) + L-glutamate + ADP + phosphate + 2 H(+). Functionally, allows the formation of correctly charged Asn-tRNA(Asn) or Gln-tRNA(Gln) through the transamidation of misacylated Asp-tRNA(Asn) or Glu-tRNA(Gln) in organisms which lack either or both of asparaginyl-tRNA or glutaminyl-tRNA synthetases. The reaction takes place in the presence of glutamine and ATP through an activated phospho-Asp-tRNA(Asn) or phospho-Glu-tRNA(Gln). This Beutenbergia cavernae (strain ATCC BAA-8 / DSM 12333 / CCUG 43141 / JCM 11478 / NBRC 16432 / NCIMB 13614 / HKI 0122) protein is Aspartyl/glutamyl-tRNA(Asn/Gln) amidotransferase subunit C.